A 159-amino-acid polypeptide reads, in one-letter code: Endoribonuclease YbeY (159 aa).

The Zn(2+) site is built by His-125, His-129, and His-135.

This sequence belongs to the endoribonuclease YbeY family. Zn(2+) serves as cofactor.

It is found in the cytoplasm. In terms of biological role, single strand-specific metallo-endoribonuclease involved in late-stage 70S ribosome quality control and in maturation of the 3' terminus of the 16S rRNA. In Ligilactobacillus salivarius (strain UCC118) (Lactobacillus salivarius), this protein is Endoribonuclease YbeY.